The primary structure comprises 131 residues: U-scoloptoxin-Er5e (131 aa).

Positions 1–22 (MKTNCEFPLLCLLIVLVANVEG) are cleaved as a signal peptide. Positions 23 to 94 (EVEDNELKMV…KRLWRNWERR (72 aa)) are excised as a propeptide. 3 RLWRNWE repeats span residues 34 to 40 (RLWRNWE), 61 to 67 (RLWRNWE), and 86 to 92 (RLWRNWE). The residue at position 95 (Gln-95) is a Pyrrolidone carboxylic acid. The stretch at 107-113 (ELWRNWE) is one RLWRNWE 4; approximate repeat. A propeptide spanning residues 112-131 (WEDLKRRQVVDLNDEQKTTG) is cleaved from the precursor.

It belongs to the scoloptoxin-08 family. As to expression, expressed by the venom gland.

It localises to the secreted. The chain is U-scoloptoxin-Er5e from Ethmostigmus rubripes (Giant centipede).